The following is a 167-amino-acid chain: Regulatory protein RecX (167 aa).

The segment at 19-49 (ESELRRKLASQPFSAKGHWGKQTGRSDNEPV) is disordered.

The protein belongs to the RecX family.

The protein localises to the cytoplasm. Its function is as follows. Modulates RecA activity. The polypeptide is Regulatory protein RecX (Yersinia enterocolitica serotype O:8 / biotype 1B (strain NCTC 13174 / 8081)).